We begin with the raw amino-acid sequence, 117 residues long: MTRVRRGYIARRRRTKIRLFAATFRGAHSRLTRAATQQKMRALVSAHRDRGKQKRDFRRLWITRINAVTRENGVCYSYSRLMHNLYKRQLLLNRXILAQLAILNKNCLHIISNEIIK.

This sequence belongs to the bacterial ribosomal protein bL20 family.

It is found in the plastid. The protein resides in the chloroplast. Functionally, binds directly to 23S ribosomal RNA and is necessary for the in vitro assembly process of the 50S ribosomal subunit. It is not involved in the protein synthesizing functions of that subunit. The protein is Large ribosomal subunit protein bL20c of Acorus gramineus (Dwarf sweet flag).